Consider the following 252-residue polypeptide: Lipoprotein PrgK (252 aa).

Residues methionine 1 to glycine 17 form the signal peptide. Cysteine 18 is lipidated: N-palmitoyl cysteine. Cysteine 18 carries S-diacylglycerol cysteine lipidation. A helical membrane pass occupies residues phenylalanine 207–valine 227.

Belongs to the YscJ lipoprotein family.

Its subcellular location is the cell outer membrane. Functionally, required for invasion of epithelial cells. Could be involved in protein secretion. The polypeptide is Lipoprotein PrgK (prgK) (Salmonella typhimurium (strain LT2 / SGSC1412 / ATCC 700720)).